A 123-amino-acid polypeptide reads, in one-letter code: Large ribosomal subunit protein uL14 (123 aa).

Belongs to the universal ribosomal protein uL14 family. As to quaternary structure, part of the 50S ribosomal subunit. Forms a cluster with proteins L3 and L19. In the 70S ribosome, L14 and L19 interact and together make contacts with the 16S rRNA in bridges B5 and B8.

In terms of biological role, binds to 23S rRNA. Forms part of two intersubunit bridges in the 70S ribosome. The polypeptide is Large ribosomal subunit protein uL14 (Corynebacterium urealyticum (strain ATCC 43042 / DSM 7109)).